Reading from the N-terminus, the 222-residue chain is Prolactin-3B1 (222 aa).

The first 31 residues, 1 to 31 (MKLSLSQPCSFSGALLLLAVSNLLVWEKVTS), serve as a signal peptide directing secretion. 2 cysteine pairs are disulfide-bonded: C82–C197 and C214–C222.

Belongs to the somatotropin/prolactin family.

Its subcellular location is the secreted. The chain is Prolactin-3B1 (Prl3b1) from Mus musculus (Mouse).